The following is a 365-amino-acid chain: tRNA 2-selenouridine synthase (365 aa).

Positions Leu-15 to Asp-138 constitute a Rhodanese domain. Residue Cys-98 is the S-selanylcysteine intermediate of the active site.

It belongs to the SelU family. Monomer.

It carries out the reaction 5-methylaminomethyl-2-thiouridine(34) in tRNA + selenophosphate + (2E)-geranyl diphosphate + H2O + H(+) = 5-methylaminomethyl-2-selenouridine(34) in tRNA + (2E)-thiogeraniol + phosphate + diphosphate. The catalysed reaction is 5-methylaminomethyl-2-thiouridine(34) in tRNA + (2E)-geranyl diphosphate = 5-methylaminomethyl-S-(2E)-geranyl-thiouridine(34) in tRNA + diphosphate. The enzyme catalyses 5-methylaminomethyl-S-(2E)-geranyl-thiouridine(34) in tRNA + selenophosphate + H(+) = 5-methylaminomethyl-2-(Se-phospho)selenouridine(34) in tRNA + (2E)-thiogeraniol. It catalyses the reaction 5-methylaminomethyl-2-(Se-phospho)selenouridine(34) in tRNA + H2O = 5-methylaminomethyl-2-selenouridine(34) in tRNA + phosphate. Its function is as follows. Involved in the post-transcriptional modification of the uridine at the wobble position (U34) of tRNA(Lys), tRNA(Glu) and tRNA(Gln). Catalyzes the conversion of 2-thiouridine (S2U-RNA) to 2-selenouridine (Se2U-RNA). Acts in a two-step process involving geranylation of 2-thiouridine (S2U) to S-geranyl-2-thiouridine (geS2U) and subsequent selenation of the latter derivative to 2-selenouridine (Se2U) in the tRNA chain. The chain is tRNA 2-selenouridine synthase from Shewanella pealeana (strain ATCC 700345 / ANG-SQ1).